The sequence spans 670 residues: Methionine--tRNA ligase (670 aa).

Residues 14–24 (PYANGHLHLGH) carry the 'HIGH' region motif. Zn(2+) is bound by residues cysteine 145, cysteine 148, cysteine 158, and cysteine 161. The 'KMSKS' region signature appears at 330-334 (KMSKS). Lysine 333 is an ATP binding site. Residues 570 to 670 (DFAKVDLRIA…AGALPGMKVK (101 aa)) form the tRNA-binding domain.

It belongs to the class-I aminoacyl-tRNA synthetase family. MetG type 1 subfamily. In terms of assembly, homodimer. It depends on Zn(2+) as a cofactor.

The protein localises to the cytoplasm. It carries out the reaction tRNA(Met) + L-methionine + ATP = L-methionyl-tRNA(Met) + AMP + diphosphate. In terms of biological role, is required not only for elongation of protein synthesis but also for the initiation of all mRNA translation through initiator tRNA(fMet) aminoacylation. The chain is Methionine--tRNA ligase from Legionella pneumophila subsp. pneumophila (strain Philadelphia 1 / ATCC 33152 / DSM 7513).